Here is a 119-residue protein sequence, read N- to C-terminus: Large ribosomal subunit protein bL19 (119 aa).

The protein belongs to the bacterial ribosomal protein bL19 family.

Its function is as follows. This protein is located at the 30S-50S ribosomal subunit interface and may play a role in the structure and function of the aminoacyl-tRNA binding site. The sequence is that of Large ribosomal subunit protein bL19 from Idiomarina loihiensis (strain ATCC BAA-735 / DSM 15497 / L2-TR).